The following is a 153-amino-acid chain: UPF0251 protein Daud_0090 (153 aa).

The segment covering Glu-129–Ser-138 has biased composition (basic and acidic residues). Positions Glu-129–Arg-153 are disordered. Basic residues predominate over residues Arg-139–Arg-153.

The protein belongs to the UPF0251 family.

This is UPF0251 protein Daud_0090 from Desulforudis audaxviator (strain MP104C).